The following is a 158-amino-acid chain: Endoribonuclease YbeY (158 aa).

Zn(2+) contacts are provided by His124, His128, and His134.

Belongs to the endoribonuclease YbeY family. Requires Zn(2+) as cofactor.

Its subcellular location is the cytoplasm. Single strand-specific metallo-endoribonuclease involved in late-stage 70S ribosome quality control and in maturation of the 3' terminus of the 16S rRNA. This Caldicellulosiruptor saccharolyticus (strain ATCC 43494 / DSM 8903 / Tp8T 6331) protein is Endoribonuclease YbeY.